A 161-amino-acid chain; its full sequence is Protein YzcX (161 aa).

The sequence is that of Protein YzcX (yzcX) from Escherichia coli (strain K12).